The chain runs to 86 residues: Alpha-mammal toxin Ts3 (86 aa).

The N-terminal stretch at 1 to 19 (MNYFILLVVVCLLTAGTEG) is a signal peptide. Residues 21 to 82 (KDGYPVEYDN…EPTKTNGKCK (62 aa)) form the LCN-type CS-alpha/beta domain. 4 cysteine pairs are disulfide-bonded: Cys31-Cys81, Cys35-Cys57, Cys43-Cys64, and Cys47-Cys66. Ser83 carries the serine amide modification.

In terms of tissue distribution, expressed by the venom gland.

It is found in the secreted. Its function is as follows. Alpha toxins bind voltage-independently at site-3 of sodium channels (Nav) and inhibit the inactivation of the activated channels, thereby blocking neuronal transmission. This synthetic toxin inhibits inactivation of rat Nav1.4/SCN4A (when tested at 201 nM). In addition, it has been shown to cause a persistent sodium channel activation in nitrergic inhibitory fibers innervating the rabbit corpus cavernosum, resulting in NO release and cavernosal smooth muscle relaxation. This toxin is active against mammals. In terms of biological role, this synthetic peptide with a Ser at position 31 (C12S) acts as a bradykinin-potentiating peptide (BPP). Induces endothelium-dependent vasodilation that is reverted by NO synthase inhibitor, suggesting it activates molecular targets on vascular endothelium leading to NO production and vasodilation. It appears to induce vasodilation through muscarinic acetylcholine receptors (AChR) M2 (CHRM2) and M3 (CHRM3). Does not inhibit the angiotensin-converting enzyme (ACE). Does not act via bradykinin B2 receptor. This chain is Alpha-mammal toxin Ts3, found in Tityus serrulatus (Brazilian scorpion).